A 209-amino-acid chain; its full sequence is Abscisic acid receptor PYL5 (209 aa).

Positions 44-196 are START-like; the sequence is HAPGEHQCSS…NLTSLAEVSE (153 aa). Cysteine 51 and cysteine 177 are oxidised to a cystine. Abscisate-binding positions include lysine 80, 109-114, 136-142, and glutamate 161; these read ATTSTE and RLRNYSS. Positions 105 to 109 match the Gate loop motif; sequence TGLPA. A Latch loop motif is present at residues 135-137; sequence HRL.

It belongs to the PYR/PYL/RCAR abscisic acid intracellular receptor family. As to quaternary structure, monomer. Interacts with PP2C30. Binding to PP2C30 is dependent on the presence of abscisic acid (ABA). Interacts with PP2C51. Binding to PP2C51 is dependent on the presence of ABA. Interacts with PP2C50. Binding to PP2C50 is dependent on the presence of ABA. Interacts with PP2C53. As to expression, expressed in leaf sheaths and leaf blades. Expressed at low levels in roots, flowers and seeds.

Its subcellular location is the nucleus. It localises to the cytoplasm. The protein localises to the cytosol. Intracellular abscisic acid (ABA) receptor that functions as a positive regulator of ABA signaling pathway. Together with ABI5, PP2C30 and SAPK2, is part of an ABA signaling unit that modulates seed germination and early seedling growth. Acts as a positive regulator of abiotic stress-responsive gene expression. Inhibits the protein phosphatases PP2C06 and PP2C09 when activated by ABA. The protein is Abscisic acid receptor PYL5 of Oryza sativa subsp. japonica (Rice).